The primary structure comprises 187 residues: uncharacterized protein (187 aa).

Residues 139–168 (ESKDRKALKNAARKAEKNAHEESSYFRVDD) show a composition bias toward basic and acidic residues. The tract at residues 139 to 172 (ESKDRKALKNAARKAEKNAHEESSYFRVDDPEPE) is disordered.

This is an uncharacterized protein from Caenorhabditis elegans.